We begin with the raw amino-acid sequence, 326 residues long: tRNA N6-adenosine threonylcarbamoyltransferase (326 aa).

Positions 113 and 117 each coordinate Fe cation. Substrate is bound by residues 134–138, D167, G180, and N267; that span reads VASGG. D291 is a binding site for Fe cation.

Belongs to the KAE1 / TsaD family. It depends on Fe(2+) as a cofactor.

It localises to the cytoplasm. The enzyme catalyses L-threonylcarbamoyladenylate + adenosine(37) in tRNA = N(6)-L-threonylcarbamoyladenosine(37) in tRNA + AMP + H(+). In terms of biological role, required for the formation of a threonylcarbamoyl group on adenosine at position 37 (t(6)A37) in tRNAs that read codons beginning with adenine. Is involved in the transfer of the threonylcarbamoyl moiety of threonylcarbamoyl-AMP (TC-AMP) to the N6 group of A37, together with TsaE and TsaB. TsaD likely plays a direct catalytic role in this reaction. The sequence is that of tRNA N6-adenosine threonylcarbamoyltransferase from Thermus thermophilus (strain ATCC 27634 / DSM 579 / HB8).